Reading from the N-terminus, the 122-residue chain is Large ribosomal subunit protein uL14 (122 aa).

The protein belongs to the universal ribosomal protein uL14 family. As to quaternary structure, part of the 50S ribosomal subunit. Forms a cluster with proteins L3 and L19. In the 70S ribosome, L14 and L19 interact and together make contacts with the 16S rRNA in bridges B5 and B8.

Binds to 23S rRNA. Forms part of two intersubunit bridges in the 70S ribosome. The chain is Large ribosomal subunit protein uL14 from Borrelia hermsii (strain HS1 / DAH).